Consider the following 857-residue polypeptide: KH domain-containing protein HEN4 (857 aa).

Residues 1–15 are compositionally biased toward basic and acidic residues; sequence MERNSVKFHAEKRSG. The segment at 1–27 is disordered; sequence MERNSVKFHAEKRSGAFDPGSGFGSSK. 4 consecutive KH domains span residues 46-110, 149-217, 451-521, and 541-610; these read HAAF…KLGA, TVVC…LVSI, DVVF…IMLI, and SITA…IFHI. The tract at residues 644 to 755 is disordered; the sequence is SDNPLSIGSH…RGLSDASGGL (112 aa). 2 stretches are compositionally biased toward polar residues: residues 645 to 665 and 673 to 688; these read DNPLSIGSHQSVSNPATNSSS and SFLSGSHSSVNYSRSV. Basic and acidic residues predominate over residues 718–730; the sequence is FTMDHSDNSHHLT. The segment covering 746–755 has biased composition (low complexity); it reads RGLSDASGGL. Residues 775-839 enclose the KH 5 domain; sequence NTTVEIRVPA…DQTQAAQNLL (65 aa).

In terms of assembly, interacts with HUA1. Interacts with FLK and PEP.

It localises to the nucleus speckle. Functions in floral reproductive organ identity in the third whorl and floral determinacy specification by specifically promoting the processing of AGAMOUS (AG) pre-mRNA. Functions in association with HUA1 and HUA2. This Arabidopsis thaliana (Mouse-ear cress) protein is KH domain-containing protein HEN4.